The following is a 490-amino-acid chain: Cardiolipin synthase 1 (490 aa).

2 helical membrane passes run 9–29 (ILTI…FVII) and 42–62 (WAWL…YLFL). PLD phosphodiesterase domains lie at 225-252 (MNNR…GDDY) and 403-430 (QNGF…DFRS). Active-site residues include H230, K232, D237, H408, K410, and D415.

This sequence belongs to the phospholipase D family. Cardiolipin synthase subfamily.

It is found in the cell membrane. The catalysed reaction is 2 a 1,2-diacyl-sn-glycero-3-phospho-(1'-sn-glycerol) = a cardiolipin + glycerol. Catalyzes the reversible phosphatidyl group transfer from one phosphatidylglycerol molecule to another to form cardiolipin (CL) (diphosphatidylglycerol) and glycerol. The protein is Cardiolipin synthase 1 (cls1) of Staphylococcus epidermidis (strain ATCC 12228 / FDA PCI 1200).